The sequence spans 550 residues: Thioredoxin domain-containing protein 2 (550 aa).

A disordered region spans residues 1–50 (MFKKNQKLSKDKGLEVNSVQAGAPEESDVKLNNGGKANERGSNEFLDTAQ). Phosphoserine is present on residues S42 and S51. Residues 63 to 428 (MLHMSTEESE…IKSSEDVQPS (366 aa)) form a disordered region. Polar residues-rich tracts occupy residues 73–87 (PPQQVSSTSMFSENT), 96–105 (PKSSTKNTQL), and 112–140 (KTSSYSKQTNSSNIPKSLAITTYPKQGST). 22 consecutive repeat copies span residues 104–118 (QLKQEDISKTSSYSK), 119–133 (QTNSSNIPKSLAITT), 134–148 (YPKQGSTLKPAANGT), 149–163 (HDREAEKPKSSEDLI), 164–178 (QSKKGDIFKPSEDSI), 179–193 (QSKKGDMPKSSEDPI), 194–208 (QSKKDDTAKSLEDTI), 209–223 (QSKNGDMPKSSEDPI), 224–238 (QSKKDDTARSLEDSI), 239–252 (QSKKGDMPKSSDTI), 253–267 (QSKESETPKFLQDTI), 268–282 (QSKGGKINKQVKDSM), 283–297 (KSKESKIRKPLKDSI), 298–312 (QSKENKIPKSSQDSA), 313–327 (QPKEGKIHKPLKDSL), 328–342 (PSKEGDISKPSEDTI), 343–357 (QAKEEITVSPEDTIQ), 358–384 (AKEEITMSPEDTIQAKEEITVSPEDTI), 385–399 (QAKEEITVSPEDTMQ), 400–412 (SKEEITVSPEDTV), 413–425 (QSQEGDIKSSEDV), and 426–440 (QPSENEIFPFEAEIE). The segment at 104 to 440 (QLKQEDISKT…EIFPFEAEIE (337 aa)) is 22 X 15 AA approximate tandem repeat of Q-P-K-X-G-D-I-P-K-S-[PS]-E-[KE]-X-I. Composition is skewed to basic and acidic residues over residues 148–205 (THDR…KSLE), 217–259 (KSSE…ESET), 277–304 (QVKDSMKSKESKIRKPLKDSIQSKENKI), and 313–348 (QPKEGKIHKPLKDSLPSKEGDISKPSEDTIQAKEEI). S158 carries the post-translational modification Phosphoserine. S351 and S379 each carry phosphoserine. Positions 401 to 550 (KEEITVSPED…KLEKSIAELK (150 aa)) constitute a Thioredoxin domain. At S407 the chain carries Phosphoserine. A disulfide bridge links C477 with C480.

As to expression, testis-specific. Strongly expressed in the testicular seminiferous tubules, mostly in the round spermatids.

Its subcellular location is the cytoplasm. Its function is as follows. Probably plays a regulatory role in sperm development. May participate in regulation of fibrous sheath (FS) assembly by supporting the formation of disulfide bonds during sperm tail morphogenesis. May also be required to rectify incorrect disulfide pairing and generate suitable pairs between the FS constituents. Can reduce disulfide bonds in vitro in the presence of NADP and thioredoxin reductase. This Rattus norvegicus (Rat) protein is Thioredoxin domain-containing protein 2 (Txndc2).